A 198-amino-acid polypeptide reads, in one-letter code: Recombination protein RecR (198 aa).

The segment at 57–72 adopts a C4-type zinc-finger fold; the sequence is CSVCGHITDKDPCYIC. A Toprim domain is found at 80–175; the sequence is SVICVVQESK…KVTRIAHGLP (96 aa).

The protein belongs to the RecR family.

Its function is as follows. May play a role in DNA repair. It seems to be involved in an RecBC-independent recombinational process of DNA repair. It may act with RecF and RecO. The sequence is that of Recombination protein RecR from Listeria monocytogenes serotype 4b (strain CLIP80459).